A 161-amino-acid chain; its full sequence is Tick receptor for ospA (161 aa).

Interacts with ospA protein from B.burgdorferi. Post-translationally, glycosylated. As to expression, specifically expressed in gut. Localizes predominantly in the intercellular spaces and luminal surface of the gut. In the gut, it localizes along tight junctions. Not expressed in salivary gland or hemolymph.

It localises to the cell membrane. In terms of biological role, serves as a receptor for ospA protein of B.burgdorferi, the Lyme disease agent. Required for spirochetal colonization. Essential for pathogen adherence to the vector. This is Tick receptor for ospA (TROSPA) from Ixodes scapularis (Black-legged tick).